Reading from the N-terminus, the 621-residue chain is Phosphoenolpyruvate carboxykinase [GTP] (621 aa).

Residues Arg-83 and 217–219 (YGG) contribute to the substrate site. Mn(2+) is bound by residues Lys-226 and His-245. A substrate-binding site is contributed by Ser-267. 268 to 273 (MCGKTS) serves as a coordination point for GTP. The active site involves Cys-269. Position 286 (Asp-286) interacts with Mn(2+). 381-383 (NAR) is a substrate binding site. The GTP site is built by Arg-383 and Arg-415.

Belongs to the phosphoenolpyruvate carboxykinase [GTP] family. Mn(2+) serves as cofactor.

It localises to the cytoplasm. It catalyses the reaction oxaloacetate + GTP = phosphoenolpyruvate + GDP + CO2. Its pathway is carbohydrate biosynthesis; gluconeogenesis. Catalyzes the conversion of oxaloacetate (OAA) to phosphoenolpyruvate (PEP), the rate-limiting step in the metabolic pathway that produces glucose from lactate and other precursors derived from the citric acid cycle. The protein is Phosphoenolpyruvate carboxykinase [GTP] of Pyrococcus horikoshii (strain ATCC 700860 / DSM 12428 / JCM 9974 / NBRC 100139 / OT-3).